Reading from the N-terminus, the 252-residue chain is Chitooligosaccharide deacetylase (252 aa).

Mg(2+) is bound by residues histidine 61 and histidine 125.

Belongs to the YdjC deacetylase family. ChbG subfamily. In terms of assembly, homodimer. Mg(2+) is required as a cofactor.

The protein resides in the cytoplasm. It catalyses the reaction N,N'-diacetylchitobiose + H2O = N-acetyl-beta-D-glucosaminyl-(1-&gt;4)-D-glucosamine + acetate. It carries out the reaction diacetylchitobiose-6'-phosphate + H2O = N'-monoacetylchitobiose-6'-phosphate + acetate. The protein operates within glycan degradation; chitin degradation. Involved in the degradation of chitin. ChbG is essential for growth on the acetylated chitooligosaccharides chitobiose and chitotriose but is dispensable for growth on cellobiose and chitosan dimer, the deacetylated form of chitobiose. Deacetylation of chitobiose-6-P and chitotriose-6-P is necessary for both the activation of the chb promoter by the regulatory protein ChbR and the hydrolysis of phosphorylated beta-glucosides by the phospho-beta-glucosidase ChbF. Catalyzes the removal of only one acetyl group from chitobiose-6-P to yield monoacetylchitobiose-6-P, the inducer of ChbR and the substrate of ChbF. The chain is Chitooligosaccharide deacetylase from Shigella flexneri serotype 5b (strain 8401).